The following is a 149-amino-acid chain: Transcriptional repressor NrdR (149 aa).

A zinc finger lies at 3-34; the sequence is CPFCTAEETKVIDSRLAADGYQIRRRRECIGC. One can recognise an ATP-cone domain in the interval 49–139; the sequence is PYIIKNNGNR…VYLSFDDIEE (91 aa).

Belongs to the NrdR family. It depends on Zn(2+) as a cofactor.

In terms of biological role, negatively regulates transcription of bacterial ribonucleotide reductase nrd genes and operons by binding to NrdR-boxes. The sequence is that of Transcriptional repressor NrdR from Haemophilus ducreyi (strain 35000HP / ATCC 700724).